The chain runs to 913 residues: Cadherin-4 (913 aa).

The N-terminal stretch at 1–20 is a signal peptide; it reads MTTGSVLPLLLLGLSGALRA. The propeptide occupies 21-166; it reads HREDLTVREA…SSGGLRRQKR (146 aa). N-linked (GlcNAc...) asparagine glycosylation is present at Asn146. Cadherin domains follow at residues 167 to 274, 275 to 389, 390 to 504, 505 to 610, and 611 to 721; these read DWVI…RPEF, INQV…PPEF, TTST…APYF, PSNH…DNAP, and QLLP…TVGA. At 167–731 the chain is on the extracellular side; it reads DWVIPPINVP…VAAAGLGTGA (565 aa). Residues Asn280, Asn409, Asn554, Asn629, Asn658, and Asn699 are each glycosylated (N-linked (GlcNAc...) asparagine). Residues 732-753 form a helical membrane-spanning segment; the sequence is IVAILICIVILLIMVLLFVVWM. At 754-913 the chain is on the cytoplasmic side; that stretch reads KRREKERHTK…ADMYGGGEED (160 aa).

In terms of tissue distribution, distributed widely in mouse tissues with high levels present in brain, skeletal muscle and thymus.

The protein resides in the cell membrane. Its function is as follows. Cadherins are calcium-dependent cell adhesion proteins. They preferentially interact with themselves in a homophilic manner in connecting cells; cadherins may thus contribute to the sorting of heterogeneous cell types. May play an important role in retinal development. The sequence is that of Cadherin-4 (Cdh4) from Mus musculus (Mouse).